The sequence spans 321 residues: Sideroflexin-3 (321 aa).

M1 carries the N-acetylmethionine modification. 4 helical membrane passes run 146 to 164, 174 to 194, 226 to 246, and 266 to 286; these read LGMAYVSATTGAVATALGL, LVGRFVPFAAVAAANCINIPL, FQVVISRICMAIPAMAIPPVI, and LQMGLVGFCLVFATPLCCALF.

This sequence belongs to the sideroflexin family.

The protein localises to the mitochondrion membrane. The enzyme catalyses L-serine(in) = L-serine(out). Its function is as follows. Mitochondrial serine transporter that mediates transport of serine into mitochondria, an important step of the one-carbon metabolism pathway. Mitochondrial serine is converted to glycine and formate, which then exits to the cytosol where it is used to generate the charged folates that serve as one-carbon donors. This is Sideroflexin-3 (SFXN3) from Bos taurus (Bovine).